The sequence spans 216 residues: MAVALWYCPPANSPCYDTVNSLILSLQTLFPDAVLFEPHVTITSQLRCDSADDAAAVLAAACAALRACRPQLDARGSPVVRFDAVAVGRRYFDKVHLACAHDRFLYGVAQVIRELFVQDPPDPAAAADWVHSSFRPHLSLVYSDLYHVDQALLRVLRQRIGDALGAALLPHPPAPGLQALWALQPPLDGWSIPGSFKVVRCEGPVRDWHVLAAADL.

Residue His-39 is the Proton donor/acceptor of the active site. Residue Thr-41 participates in substrate binding. His-137 (proton donor/acceptor) is an active-site residue. Positions 139 and 142 each coordinate substrate.

This sequence belongs to the 2H phosphoesterase superfamily. CPD1 family.

Its subcellular location is the golgi apparatus. The catalysed reaction is a nucleoside 2',3'-cyclic phosphate + H2O = a nucleoside 2'-phosphate + H(+). In terms of biological role, involved in the metabolism of ADP-ribose 1',2'-cyclic phosphate which is produced as a consequence of tRNA splicing. This chain is 2',3'-cyclic-nucleotide 3'-phosphodiesterase (CPD1), found in Eremothecium gossypii (strain ATCC 10895 / CBS 109.51 / FGSC 9923 / NRRL Y-1056) (Yeast).